Reading from the N-terminus, the 88-residue chain is Mitochondrial import inner membrane translocase subunit Tim10 (88 aa).

The short motif at 25 to 49 (CSAKCISKYNEGDLNVGESVCAERC) is the Twin CX3C motif element. Cystine bridges form between cysteine 25/cysteine 49 and cysteine 29/cysteine 45. The disordered stretch occupies residues 63 to 88 (KMSGTQPGQEVPQEAPAAAPEKKGWF). Over residues 68-81 (QPGQEVPQEAPAAA) the composition is skewed to low complexity.

This sequence belongs to the small Tim family. In terms of assembly, heterohexamer; composed of 3 copies of timm9 and 3 copies of timm10, named soluble 70 kDa complex. Associates directly with the TIM22 complex, whose core is composed of timm22. Interacts with the transmembrane regions of multi-pass transmembrane proteins in transit.

The protein resides in the mitochondrion inner membrane. Component of the TIM22 complex, a complex that mediates the import and insertion of multi-pass transmembrane proteins into the mitochondrial inner membrane. The TIM22 complex forms a twin-pore translocase that uses the membrane potential as external driving force. In Dictyostelium discoideum (Social amoeba), this protein is Mitochondrial import inner membrane translocase subunit Tim10 (timm10).